A 107-amino-acid chain; its full sequence is Thioredoxin 1 (107 aa).

Residues 2 to 107 (SAAAQVTDST…TLSQTLEKHL (106 aa)) enclose the Thioredoxin domain. A disulfide bridge links cysteine 32 with cysteine 35.

This sequence belongs to the thioredoxin family.

Its function is as follows. Participates in various redox reactions through the reversible oxidation of its active center dithiol to a disulfide and catalyzes dithiol-disulfide exchange reactions. The protein is Thioredoxin 1 (trxA) of Nostoc sp. (strain PCC 7120 / SAG 25.82 / UTEX 2576).